Here is a 623-residue protein sequence, read N- to C-terminus: V-type proton ATPase catalytic subunit A (623 aa).

Residue 252-259 (GAFGCGKT) coordinates ATP.

This sequence belongs to the ATPase alpha/beta chains family. V-ATPase is a heteromultimeric enzyme composed of a peripheral catalytic V1 complex (main components: subunits A, B, C, D, E, and F) attached to an integral membrane V0 proton pore complex (main component: the proteolipid protein).

The catalysed reaction is ATP + H2O + 4 H(+)(in) = ADP + phosphate + 5 H(+)(out). In terms of biological role, catalytic subunit of the peripheral V1 complex of vacuolar ATPase. V-ATPase vacuolar ATPase is responsible for acidifying a variety of intracellular compartments in eukaryotic cells. This Brassica napus (Rape) protein is V-type proton ATPase catalytic subunit A.